We begin with the raw amino-acid sequence, 153 residues long: Probable inactive ribonuclease-like protein 13 (153 aa).

Residues 1-22 (MAPDVAWLLVLPLVFRPTLVTG) form the signal peptide.

The protein belongs to the pancreatic ribonuclease family.

It is found in the secreted. Does not exhibit any ribonuclease activity. This chain is Probable inactive ribonuclease-like protein 13 (Rnase13), found in Mus musculus (Mouse).